The chain runs to 178 residues: ATP-dependent protease subunit HslV (178 aa).

Thr7 is an active-site residue. Residues Gly162, Cys165, and Thr168 each coordinate Na(+).

This sequence belongs to the peptidase T1B family. HslV subfamily. As to quaternary structure, a double ring-shaped homohexamer of HslV is capped on each side by a ring-shaped HslU homohexamer. The assembly of the HslU/HslV complex is dependent on binding of ATP.

The protein resides in the cytoplasm. The enzyme catalyses ATP-dependent cleavage of peptide bonds with broad specificity.. With respect to regulation, allosterically activated by HslU binding. In terms of biological role, protease subunit of a proteasome-like degradation complex believed to be a general protein degrading machinery. The chain is ATP-dependent protease subunit HslV from Burkholderia mallei (strain ATCC 23344).